A 138-amino-acid chain; its full sequence is Spermidine export protein MdtJ (138 aa).

Transmembrane regions (helical) follow at residues 1–21, 30–50, 54–74, and 81–101; these read MIYWLFLAMAIITEVIGTLSM, VVGMAVMYIMIATSYILLAMA, VALGVAYALWEGVGILFITVF, and ESLSLMKVGGLALLITGIMLI.

Belongs to the drug/metabolite transporter (DMT) superfamily. Small multidrug resistance (SMR) (TC 2.A.7.1) family. MdtJ subfamily. As to quaternary structure, forms a complex with MdtI.

Its subcellular location is the cell inner membrane. In terms of biological role, catalyzes the excretion of spermidine. The polypeptide is Spermidine export protein MdtJ (Photorhabdus laumondii subsp. laumondii (strain DSM 15139 / CIP 105565 / TT01) (Photorhabdus luminescens subsp. laumondii)).